The following is a 468-amino-acid chain: ATP synthase subunit beta (468 aa).

Residue 150–157 (GGAGVGKT) participates in ATP binding.

Belongs to the ATPase alpha/beta chains family. As to quaternary structure, F-type ATPases have 2 components, CF(1) - the catalytic core - and CF(0) - the membrane proton channel. CF(1) has five subunits: alpha(3), beta(3), gamma(1), delta(1), epsilon(1). CF(0) has three main subunits: a(1), b(2) and c(9-12). The alpha and beta chains form an alternating ring which encloses part of the gamma chain. CF(1) is attached to CF(0) by a central stalk formed by the gamma and epsilon chains, while a peripheral stalk is formed by the delta and b chains.

Its subcellular location is the cell inner membrane. The enzyme catalyses ATP + H2O + 4 H(+)(in) = ADP + phosphate + 5 H(+)(out). Produces ATP from ADP in the presence of a proton gradient across the membrane. The catalytic sites are hosted primarily by the beta subunits. This is ATP synthase subunit beta from Acidovorax ebreus (strain TPSY) (Diaphorobacter sp. (strain TPSY)).